The following is a 283-amino-acid chain: Probable endonuclease 4 (283 aa).

Zn(2+) is bound by residues histidine 69, histidine 109, glutamate 145, aspartate 179, histidine 182, histidine 216, aspartate 229, histidine 231, and glutamate 261.

This sequence belongs to the AP endonuclease 2 family. It depends on Zn(2+) as a cofactor.

The catalysed reaction is Endonucleolytic cleavage to 5'-phosphooligonucleotide end-products.. In terms of biological role, endonuclease IV plays a role in DNA repair. It cleaves phosphodiester bonds at apurinic or apyrimidinic (AP) sites, generating a 3'-hydroxyl group and a 5'-terminal sugar phosphate. The polypeptide is Probable endonuclease 4 (Campylobacter curvus (strain 525.92)).